We begin with the raw amino-acid sequence, 64 residues long: Large ribosomal subunit protein bL35 (64 aa).

The protein belongs to the bacterial ribosomal protein bL35 family.

This chain is Large ribosomal subunit protein bL35, found in Shewanella halifaxensis (strain HAW-EB4).